Consider the following 373-residue polypeptide: ORC1-type DNA replication protein 2 (373 aa).

ATP contacts are provided by residues 63–67, Tyr-205, and Arg-217; that span reads TGKTS.

It belongs to the CDC6/cdc18 family.

Functionally, involved in regulation of DNA replication. The sequence is that of ORC1-type DNA replication protein 2 (cdc6-2) from Methanosarcina acetivorans (strain ATCC 35395 / DSM 2834 / JCM 12185 / C2A).